A 139-amino-acid polypeptide reads, in one-letter code: Pre-hexon-linking protein VIII (139 aa).

Residues 35–69 (GAAGDYFKSPTSARTLIPLTASCLRPDGVFQLGGG) constitute a propeptide that is removed on maturation.

This sequence belongs to the adenoviridae hexon-linking protein family. In terms of assembly, interacts with the peripentonal hexons as well as the hexons in the facets. Part of a complex composed of the core-capsid bridging protein, the endosome lysis protein VI and the hexon-linking protein VIII; these interactions bridge the virus core to the capsid. In terms of processing, cleaved by the viral protease during virion maturation. May cause the middle segment to be shed from the capsid.

The protein localises to the host nucleus. The protein resides in the virion. Structural component of the virion that acts as a cement protein on the capsid interior and which glue the peripentonal hexons and group-of-nine hexons together. This is Pre-hexon-linking protein VIII from Bovine adenovirus B serotype 3 (BAdV-3).